The chain runs to 218 residues: Glutathione S-transferase Mu 4 (218 aa).

The GST N-terminal domain occupies 1–88 (MPMTLGYWDI…YIARKHNLCG (88 aa)). Glutathione-binding positions include 7-8 (YW), 46-50 (WLSEK), 59-60 (NL), and 72-73 (QS). Residues 90–208 (TEEEKIRVDI…KTSRFLRTPL (119 aa)) form the GST C-terminal domain. Substrate is bound at residue tyrosine 116.

The protein belongs to the GST superfamily. Mu family. As to quaternary structure, homodimer.

The protein resides in the cytoplasm. The catalysed reaction is RX + glutathione = an S-substituted glutathione + a halide anion + H(+). It catalyses the reaction 1-chloro-2,4-dinitrobenzene + glutathione = 2,4-dinitrophenyl-S-glutathione + chloride + H(+). It carries out the reaction (13S,14S)-epoxy-(4Z,7Z,9E,11E,16Z,19Z)-docosahexaenoate + glutathione = (13R)-S-glutathionyl-(14S)-hydroxy-(4Z,7Z,9E,11E,16Z,19Z)-docosahexaenoate. The enzyme catalyses leukotriene C4 = leukotriene A4 + glutathione. In terms of biological role, conjugation of reduced glutathione to a wide number of exogenous and endogenous hydrophobic electrophiles. Catalyzes the conjugation of leukotriene A4 with reduced glutathione (GSH) to form leukotriene C4. Can also catalyze the transfer of a glutathionyl group from glutathione (GSH) to 13(S),14(S)-epoxy-docosahexaenoic acid to form maresin conjugate in tissue regeneration 1 (MCTR1), a bioactive lipid mediator that possess potent anti-inflammatory and proresolving actions. This chain is Glutathione S-transferase Mu 4 (Gstm4), found in Rattus norvegicus (Rat).